Consider the following 300-residue polypeptide: 33 kDa chaperonin (300 aa).

2 disulfide bridges follow: Cys-235–Cys-237 and Cys-269–Cys-272.

Belongs to the HSP33 family. In terms of processing, under oxidizing conditions two disulfide bonds are formed involving the reactive cysteines. Under reducing conditions zinc is bound to the reactive cysteines and the protein is inactive.

It localises to the cytoplasm. Redox regulated molecular chaperone. Protects both thermally unfolding and oxidatively damaged proteins from irreversible aggregation. Plays an important role in the bacterial defense system toward oxidative stress. The chain is 33 kDa chaperonin from Pseudomonas syringae pv. syringae (strain B728a).